The chain runs to 143 residues: Transcriptional regulator MraZ (143 aa).

2 consecutive SpoVT-AbrB domains span residues 5 to 47 and 76 to 119; these read THHP…PRAE and TDEQ…NAER.

Belongs to the MraZ family. As to quaternary structure, forms oligomers.

The protein resides in the cytoplasm. Its subcellular location is the nucleoid. The protein is Transcriptional regulator MraZ of Saccharopolyspora erythraea (strain ATCC 11635 / DSM 40517 / JCM 4748 / NBRC 13426 / NCIMB 8594 / NRRL 2338).